We begin with the raw amino-acid sequence, 462 residues long: uncharacterized protein (462 aa).

A run of 2 helical transmembrane segments spans residues 12 to 32 (WWWL…APTV) and 257 to 277 (GLCV…LELV).

It belongs to the HHV-5 US29 protein family.

It localises to the host membrane. This is an uncharacterized protein from Human cytomegalovirus (strain AD169) (HHV-5).